The sequence spans 49 residues: Large ribosomal subunit protein bL33 (49 aa).

Positions 18 to 49 (ITTKNKRNNPERLELKKYSPRLKRTTLHRETK) are disordered. Positions 25–34 (NNPERLELKK) are enriched in basic and acidic residues.

This sequence belongs to the bacterial ribosomal protein bL33 family.

This Lysinibacillus sphaericus (strain C3-41) protein is Large ribosomal subunit protein bL33.